Here is a 454-residue protein sequence, read N- to C-terminus: Probable mitochondrial saccharopine dehydrogenase-like oxidoreductase At5g39410 (454 aa).

N-acetylmethionine is present on M1. Residues R215–P234 form a disordered region.

Belongs to the saccharopine dehydrogenase family.

The protein localises to the mitochondrion membrane. This is Probable mitochondrial saccharopine dehydrogenase-like oxidoreductase At5g39410 from Arabidopsis thaliana (Mouse-ear cress).